A 313-amino-acid chain; its full sequence is Porphobilinogen deaminase (313 aa).

Position 241 is an S-(dipyrrolylmethanemethyl)cysteine (cysteine 241).

Belongs to the HMBS family. As to quaternary structure, monomer. Requires dipyrromethane as cofactor.

It carries out the reaction 4 porphobilinogen + H2O = hydroxymethylbilane + 4 NH4(+). Its pathway is porphyrin-containing compound metabolism; protoporphyrin-IX biosynthesis; coproporphyrinogen-III from 5-aminolevulinate: step 2/4. In terms of biological role, tetrapolymerization of the monopyrrole PBG into the hydroxymethylbilane pre-uroporphyrinogen in several discrete steps. The protein is Porphobilinogen deaminase of Idiomarina loihiensis (strain ATCC BAA-735 / DSM 15497 / L2-TR).